The primary structure comprises 1529 residues: uncharacterized protein (1529 aa).

The span at 1–11 shows a compositional bias: low complexity; that stretch reads MDKNNNNNNSN. 7 disordered regions span residues 1 to 85, 335 to 371, 660 to 694, 798 to 843, 1016 to 1035, 1334 to 1364, and 1454 to 1497; these read MDKN…SKGV, LLSN…WSSS, LPNL…TATA, NCNI…SSYS, SSLP…NTNN, QQQQ…QLQQ, and QQQV…SRLP. The segment covering 24 to 42 has biased composition (polar residues); the sequence is QKRVQNPSFSSGQSRTVPS. Over residues 51–79 the composition is skewed to low complexity; the sequence is ISSSSSSSSISTTNNTTTTTTSGTGSTSS. The segment covering 810–833 has biased composition (low complexity); sequence NNNNNNNNNNNNNNNNNNNNNNNN. Polar residues-rich tracts occupy residues 834 to 843 and 1016 to 1027; these read VLPRSNSSYS and SSLPISQNLSDD. Residues 1454-1494 show a composition bias toward low complexity; that stretch reads QQQVQTPSSPQTLASLLGNSSSNTLTSSSSTLSLNESSTLS.

This is an uncharacterized protein from Dictyostelium discoideum (Social amoeba).